Consider the following 380-residue polypeptide: Chaperone protein DnaJ (380 aa).

The region spanning 5 to 70 (DYYEVLGVER…SKRAAYDQYG (66 aa)) is the J domain. The CR-type zinc finger occupies 139 to 217 (GTNVNIRVPT…CHGEGRVEES (79 aa)). Residues C152, C155, C169, C172, C191, C194, C205, and C208 each coordinate Zn(2+). CXXCXGXG motif repeat units follow at residues 152–159 (CKPCDGSG), 169–176 (CPTCGGIG), 191–198 (CPRCHGHG), and 205–212 (CDSCHGEG). The segment at 224-245 (VPPGVDTGDRIRLSGEGEAGTQ) is disordered.

Belongs to the DnaJ family. In terms of assembly, homodimer. Zn(2+) is required as a cofactor.

The protein resides in the cytoplasm. Its function is as follows. Participates actively in the response to hyperosmotic and heat shock by preventing the aggregation of stress-denatured proteins and by disaggregating proteins, also in an autonomous, DnaK-independent fashion. Unfolded proteins bind initially to DnaJ; upon interaction with the DnaJ-bound protein, DnaK hydrolyzes its bound ATP, resulting in the formation of a stable complex. GrpE releases ADP from DnaK; ATP binding to DnaK triggers the release of the substrate protein, thus completing the reaction cycle. Several rounds of ATP-dependent interactions between DnaJ, DnaK and GrpE are required for fully efficient folding. Also involved, together with DnaK and GrpE, in the DNA replication of plasmids through activation of initiation proteins. In Pseudomonas syringae pv. syringae (strain B728a), this protein is Chaperone protein DnaJ.